The primary structure comprises 135 residues: Galectin-1 (135 aa).

A2 is modified (N-acetylalanine). The region spanning 4-135 is the Galectin domain; the sequence is GLVASNLNLK…DFKIKCVAFE (132 aa). 2 positions are modified to N6-acetyllysine: K13 and K29. A Phosphoserine modification is found at S30. A beta-D-galactoside is bound by residues 45-49, H53, N62, and 69-72; these read HFNPR and WGAE. Residue K108 is modified to N6-acetyllysine; alternate. K108 bears the N6-succinyllysine; alternate mark. N6-acetyllysine is present on K128.

As to quaternary structure, homodimer. Binds LGALS3BP. Interacts with CD2, CD3, CD4, CD6, CD7, CD43, ALCAM and CD45. Interacts with laminin (via poly-N-acetyllactosamine). Interacts with SUSD2. Interacts with cargo receptor TMED10; the interaction mediates the translocation from the cytoplasm into the ERGIC (endoplasmic reticulum-Golgi intermediate compartment) and thereby secretion.

Its subcellular location is the secreted. The protein localises to the extracellular space. It localises to the extracellular matrix. It is found in the cytoplasm. Lectin that binds beta-galactoside and a wide array of complex carbohydrates. Plays a role in regulating apoptosis, cell proliferation and cell differentiation. Inhibits CD45 protein phosphatase activity and therefore the dephosphorylation of Lyn kinase. Strong inducer of T-cell apoptosis. The chain is Galectin-1 (LGALS1) from Bos taurus (Bovine).